The sequence spans 148 residues: Large ribosomal subunit protein bL19 (148 aa).

Belongs to the bacterial ribosomal protein bL19 family.

In terms of biological role, this protein is located at the 30S-50S ribosomal subunit interface and may play a role in the structure and function of the aminoacyl-tRNA binding site. The chain is Large ribosomal subunit protein bL19 from Beijerinckia indica subsp. indica (strain ATCC 9039 / DSM 1715 / NCIMB 8712).